Consider the following 332-residue polypeptide: Adenosine deaminase (332 aa).

Zn(2+) contacts are provided by H12 and H14. Substrate contacts are provided by H14, D16, and G170. H197 contacts Zn(2+). The active-site Proton donor is the E200. D278 is a binding site for Zn(2+).

The protein belongs to the metallo-dependent hydrolases superfamily. Adenosine and AMP deaminases family. Adenosine deaminase subfamily. Zn(2+) serves as cofactor.

It catalyses the reaction adenosine + H2O + H(+) = inosine + NH4(+). The enzyme catalyses 2'-deoxyadenosine + H2O + H(+) = 2'-deoxyinosine + NH4(+). Functionally, catalyzes the hydrolytic deamination of adenosine and 2-deoxyadenosine. This Clostridium perfringens (strain SM101 / Type A) protein is Adenosine deaminase.